The sequence spans 284 residues: Tropomyosin (284 aa).

Positions 1-273 (MDAIKKKMLA…KEKYKAISDE (273 aa)) form a coiled coil.

This sequence belongs to the tropomyosin family. In terms of assembly, homodimer.

Tropomyosin, in association with the troponin complex, plays a central role in the calcium dependent regulation of muscle contraction. The polypeptide is Tropomyosin (Haliotis diversicolor (Abalone)).